We begin with the raw amino-acid sequence, 545 residues long: Probable bifunctional tRNA threonylcarbamoyladenosine biosynthesis protein (545 aa).

A kae1 region spans residues 1–329; it reads MDTSKDLICI…YRSDMVEVNW (329 aa). Positions 112, 116, and 133 each coordinate Fe cation. L-threonylcarbamoyladenylate is bound by residues 133–137, aspartate 165, glycine 178, glutamate 182, and asparagine 262; that span reads YVSGG. Residue aspartate 290 coordinates Fe cation. In terms of domain architecture, Protein kinase spans 344–545; sequence IIPEHLIGKG…KEVEKRARYL (202 aa). ATP-binding positions include 350–358 and lysine 371; that span reads IGKGAEADI. Aspartate 463 functions as the Proton acceptor; for kinase activity in the catalytic mechanism.

The protein in the N-terminal section; belongs to the KAE1 / TsaD family. It in the C-terminal section; belongs to the protein kinase superfamily. Tyr protein kinase family. BUD32 subfamily. As to quaternary structure, component of the KEOPS complex that consists of Kae1, Bud32, Cgi121 and Pcc1; the whole complex dimerizes. Requires Fe(2+) as cofactor.

The protein localises to the cytoplasm. The catalysed reaction is L-seryl-[protein] + ATP = O-phospho-L-seryl-[protein] + ADP + H(+). It carries out the reaction L-threonyl-[protein] + ATP = O-phospho-L-threonyl-[protein] + ADP + H(+). It catalyses the reaction L-threonylcarbamoyladenylate + adenosine(37) in tRNA = N(6)-L-threonylcarbamoyladenosine(37) in tRNA + AMP + H(+). Required for the formation of a threonylcarbamoyl group on adenosine at position 37 (t(6)A37) in tRNAs that read codons beginning with adenine. Is a component of the KEOPS complex that is probably involved in the transfer of the threonylcarbamoyl moiety of threonylcarbamoyl-AMP (TC-AMP) to the N6 group of A37. The Kae1 domain likely plays a direct catalytic role in this reaction. The Bud32 domain probably displays kinase activity that regulates Kae1 function. This chain is Probable bifunctional tRNA threonylcarbamoyladenosine biosynthesis protein, found in Methanococcus maripaludis (strain C5 / ATCC BAA-1333).